We begin with the raw amino-acid sequence, 212 residues long: MLSSVVFWGLIALIGTSRGSYPFSHSMKPHLHPRLYHGCYGDIMTMKTSGATCDANSVMNCGIRGSEMFAEMDLRAIKPYQTLIKEVGQRHCVDPAVIAAIISRESHGGSVLQDGWDHRGLKFGLMQLDKQTYHPVGAWDSKEHLSQATGILTERIKAIQKKFPTWSVAQHLKGGLSAFKSGIEAIATPSDIDNDFVNDIIARAKFYKRQSF.

Positions 1-19 (MLSSVVFWGLIALIGTSRG) are cleaved as a signal peptide. Disulfide bonds link cysteine 39–cysteine 92 and cysteine 53–cysteine 61. Glutamate 105 is a catalytic residue.

It belongs to the glycosyl hydrolase 23 family. Strong expression detected in the eye and weak expression in the testis. No expression is observed in any other tissues.

Its subcellular location is the secreted. May act as a potent antibacterial protein that may play a role in the innate immunity. In Homo sapiens (Human), this protein is Lysozyme g-like protein 2 (LYG2).